The chain runs to 257 residues: Phosphate import ATP-binding protein PstB (257 aa).

The 242-residue stretch at 11–252 folds into the ABC transporter domain; it reads IQVRDLNFYY…PAKKQTEDYI (242 aa). 43-50 provides a ligand contact to ATP; the sequence is GPSGSGKS.

This sequence belongs to the ABC transporter superfamily. Phosphate importer (TC 3.A.1.7) family. The complex is composed of two ATP-binding proteins (PstB), two transmembrane proteins (PstC and PstA) and a solute-binding protein (PstS).

It is found in the cell inner membrane. It carries out the reaction phosphate(out) + ATP + H2O = ADP + 2 phosphate(in) + H(+). Part of the ABC transporter complex PstSACB involved in phosphate import. Responsible for energy coupling to the transport system. The protein is Phosphate import ATP-binding protein PstB of Salmonella choleraesuis (strain SC-B67).